Reading from the N-terminus, the 509-residue chain is Ankyrin repeat domain-containing protein 13C (509 aa).

Over residues 1-19 (MTGEKIRSLHRDQKPSKDE) the composition is skewed to basic and acidic residues. The interval 1–42 (MTGEKIRSLHRDQKPSKDEDLLEPDEEATAGGTFTRTGKLKN) is disordered. ANK repeat units lie at residues 79-110 (DAYF…QKDN), 111-140 (HGNT…PVKV), and 144-173 (QGWS…QQSR).

The protein localises to the endoplasmic reticulum membrane. In terms of biological role, acts as a molecular chaperone for G protein-coupled receptors, regulating their biogenesis and exit from the ER. The chain is Ankyrin repeat domain-containing protein 13C (ankrd13c) from Xenopus tropicalis (Western clawed frog).